Reading from the N-terminus, the 420-residue chain is Subtilisin (420 aa).

Residues 1 to 31 (MKRSGKIFTTAMLAVTLMMPAMGVSANEGNA) form the signal peptide. Positions 32-111 (AAEGNEKFRV…DKPEALYNAM (80 aa)) are excised as a propeptide. Q115 contacts Ca(2+). Positions 118–420 (PWGIKAIYNN…ASGFGFATVQ (303 aa)) constitute a Peptidase S8 domain. D145 functions as the Charge relay system in the catalytic mechanism. D154 contributes to the Ca(2+) binding site. Residues H182 and S360 each act as charge relay system in the active site.

Belongs to the peptidase S8 family. Ca(2+) serves as cofactor.

It localises to the secreted. It carries out the reaction Hydrolysis of proteins with broad specificity for peptide bonds, and a preference for a large uncharged residue in P1. Hydrolyzes peptide amides.. Functionally, subtilisin is an extracellular alkaline serine protease, it catalyzes the hydrolysis of proteins and peptide amides. This Bacillus sp. (strain TA39) protein is Subtilisin (sub1).